The primary structure comprises 236 residues: MSYNLTDPYEIARYIKEAKKSTPIKAYIEGELSNCDFTNIEKFNSGDLYILFGESEEILVIIEKNKDKIKNCRIEQDRRKSAIPLLDMLKINARIEPGAIIRDKVIIGENSVIMMGAVINIGAEIGEGTMVDMNAVVGARGKLGKNVHLGAGAVVAGVLEPPSSDPCTIEDNVLIGANAVILEGIKIGKGSVVAAGSIVTTDVPENVVVAGAPAKIIKEVDVKTKDKTKLLDDLRK.

It belongs to the transferase hexapeptide repeat family. DapH subfamily.

It catalyses the reaction (S)-2,3,4,5-tetrahydrodipicolinate + acetyl-CoA + H2O = L-2-acetamido-6-oxoheptanedioate + CoA. It participates in amino-acid biosynthesis; L-lysine biosynthesis via DAP pathway; LL-2,6-diaminopimelate from (S)-tetrahydrodipicolinate (acetylase route): step 1/3. In terms of biological role, catalyzes the transfer of an acetyl group from acetyl-CoA to tetrahydrodipicolinate. The chain is 2,3,4,5-tetrahydropyridine-2,6-dicarboxylate N-acetyltransferase from Clostridium botulinum (strain Loch Maree / Type A3).